Consider the following 432-residue polypeptide: MQYLVVSFSHKNTDIVTREKLALSDDNKREDVATTLLQNPVINEAIILSTCNRIEIILSVKDPFSATEAVLKKLSEVSGINYEELEGRADIYEDNGAIHHVFSVASGLDSLVVGETQITGQIKDAYKEAYEKGWCGQKLGRVMHYAFKCSKEVRSSTDITRSPVSVASAAVSMAKEKLGNLGGMSALVVGAGEMGRLAAKHLISHGCNVILVGRDLEKTKTVAQEIDPDIRVEHVSNLQKLINSYRLLFSATSSKNPVITKDMVKEQSFDRYWFDMAVPRDIEEIYVARIHYFAVDDLKEIVNKNMAFREEQARNAYKIVGHHVNEFFKWLQTLEIDPIIKEIRKRAKDSALAELQKAIKKGYIPKEYEKSIEKLLHNAFNRFLHDPTKQLKAIADEPRADTIVEAIKFFFEIEEEVGLNRYKCEYYMNLRS.

Residues 50–53 (TCNR), Ser-110, 115–117 (ETQ), and Gln-121 each bind substrate. Cys-51 (nucleophile) is an active-site residue. 190 to 195 (GAGEMG) contacts NADP(+).

It belongs to the glutamyl-tRNA reductase family. Homodimer.

It catalyses the reaction (S)-4-amino-5-oxopentanoate + tRNA(Glu) + NADP(+) = L-glutamyl-tRNA(Glu) + NADPH + H(+). The protein operates within porphyrin-containing compound metabolism; protoporphyrin-IX biosynthesis; 5-aminolevulinate from L-glutamyl-tRNA(Glu): step 1/2. Functionally, catalyzes the NADPH-dependent reduction of glutamyl-tRNA(Glu) to glutamate 1-semialdehyde (GSA). The protein is Glutamyl-tRNA reductase of Nitratiruptor sp. (strain SB155-2).